We begin with the raw amino-acid sequence, 440 residues long: Histidinol dehydrogenase (440 aa).

NAD(+) contacts are provided by Tyr139, Gln200, and Asn223. Residues Ser246, Gln268, and His271 each contribute to the substrate site. Gln268 and His271 together coordinate Zn(2+). Catalysis depends on proton acceptor residues Glu336 and His337. The substrate site is built by His337, Asp370, Glu424, and His429. Asp370 lines the Zn(2+) pocket. His429 contacts Zn(2+).

It belongs to the histidinol dehydrogenase family. The cofactor is Zn(2+).

It catalyses the reaction L-histidinol + 2 NAD(+) + H2O = L-histidine + 2 NADH + 3 H(+). It functions in the pathway amino-acid biosynthesis; L-histidine biosynthesis; L-histidine from 5-phospho-alpha-D-ribose 1-diphosphate: step 9/9. Catalyzes the sequential NAD-dependent oxidations of L-histidinol to L-histidinaldehyde and then to L-histidine. The polypeptide is Histidinol dehydrogenase (Bordetella bronchiseptica (strain ATCC BAA-588 / NCTC 13252 / RB50) (Alcaligenes bronchisepticus)).